A 744-amino-acid chain; its full sequence is Tripartite motif-containing protein 3 (744 aa).

N-acetylalanine is present on A2. The interval 2 to 290 (AKREDSPGPE…LAAQAFPERP (289 aa)) is interaction with KIF21B. S7 carries the phosphoserine modification. The RING-type zinc finger occupies 22–63 (CSICLDRYRCPKVLPCLHTFCERCLQNYIPPQSLTLSCPVCR). Residues 110-151 (GRPLSCPNHEGKTMEFYCEACETAMCGECRAGEHREHGTVLL) form a B box-type zinc finger. Positions 115, 118, 138, and 143 each coordinate Zn(2+). Residues 153-224 (DVVEQHKAAL…RKQALVSDLE (72 aa)) adopt a coiled-coil conformation. Residues 317-418 (TTSAAAHETV…VRGSPFRVRA (102 aa)) form a Filamin repeat. The segment at 420 to 462 (RPGDLPPSPDDVKRRVKSPGGPGSHVRQKAVRRPSSMYSTGGK) is disordered. A Phosphoserine modification is found at S427. NHL repeat units lie at residues 473-516 (VFRV…FSNE), 520-563 (KFRF…FSPE), 564-605 (GKFK…FQPN), 609-652 (VGRF…YSAD), 656-699 (LFKF…FDSS), and 700-743 (GSFL…YRYL).

This sequence belongs to the TRIM/RBCC family. As to quaternary structure, forms homooligomers. Interacts with TRIM2; this interaction reduces TRIM2 activity. Associates with myosin-Vb (MYO5B) and alpha-actinin-4 (ACTN4). Component of the CART complex, at least composed of ACTN4, HGS/HRS, MYO5B and TRIM3. Interacts with ZFYVE28/LST2. Interacts with KIF21B. Highly expressed in the brain, moderate levels in the lung, very low levels in the liver, kidney and heart. In the brain, expression was highest in the cerebellum. Expression in the brain is found at low levels at embryonic day 15 and then increases during the first two postnatal weeks before decreasing through adulthood.

It localises to the cytoplasm. The protein resides in the early endosome. It is found in the golgi apparatus. The protein localises to the trans-Golgi network. Its subcellular location is the cell projection. It localises to the dendrite. The enzyme catalyses S-ubiquitinyl-[E2 ubiquitin-conjugating enzyme]-L-cysteine + [acceptor protein]-L-lysine = [E2 ubiquitin-conjugating enzyme]-L-cysteine + N(6)-ubiquitinyl-[acceptor protein]-L-lysine.. In terms of biological role, E3 ubiquitin ligase that plays essential roles in neuronal functions such as regulation of neuronal plasticity, learning, and memory. In addition to its neuronal functions, participates in other biological processes such as innate immunity or cell cycle regulation. Component of the cytoskeleton-associated recycling or transport complex in neurons, polyubiquitinates gamma-actin, thus regulating neuronal plasticity, learning, and memory. Ubiquitinates postsynaptic scaffold GKAP, a neuronal substrate involved in synaptic remodeling and thereby modulates dendritic spine morphology. Positively regulates motility of microtubule-dependent motor protein KIF21B. Induces growth arrest via its RING-dependent E3 ligase activity and ubiquinates CDKN1A. Positively regulates TLR3-mediated signaling by mediating 'Lys-63'-linked polyubiquitination of TLR3. In turn, promotes the recognition and sorting of polyubiquitinated TLR3 by the ESCRT complexes. This Rattus norvegicus (Rat) protein is Tripartite motif-containing protein 3 (Trim3).